The chain runs to 152 residues: Transcriptional regulator MraZ (152 aa).

SpoVT-AbrB domains lie at 5-52 and 81-124; these read ATLV…PLPE and ASEC…DETT.

Belongs to the MraZ family. Forms oligomers.

The protein localises to the cytoplasm. It localises to the nucleoid. Its function is as follows. Negatively regulates its own expression and that of the subsequent genes in the proximal part of the division and cell wall (dcw) gene cluster. Acts by binding directly to DNA. May also regulate the expression of genes outside the dcw cluster. This is Transcriptional regulator MraZ from Klebsiella pneumoniae (strain 342).